A 388-amino-acid chain; its full sequence is Na(+)/H(+) antiporter NhaA (388 aa).

12 helical membrane-spanning segments follow: residues 8–28 (FLKLEAAGGLLLIITAIIALI), 33–53 (PLQGIYQQFLNISVAVQFAAL), 59–79 (LLLWINDGLMAVFFLIVGLEV), 95–115 (LFPVIAAIGGMVAPALIYLLF), 125–145 (GWAIPAATDIAFALGVMALLS), 154–174 (VFLLALAIIDDLGVIVIIALF), 179–199 (VSLVALGLSAAMIALLVWMNW), 217–237 (VCILKSGVHATLAGVIVGFLI), 259–279 (VAYLILPLFAFANAGVALNGV), 287–307 (ILPLGIAVALFLGKPLGIFLF), 328–348 (IFAVSVLCGIGFTMSIFISGL), and 363–383 (LGILMGSTIAAFMGYGLLRMV).

Belongs to the NhaA Na(+)/H(+) (TC 2.A.33) antiporter family.

The protein resides in the cell inner membrane. The catalysed reaction is Na(+)(in) + 2 H(+)(out) = Na(+)(out) + 2 H(+)(in). In terms of biological role, na(+)/H(+) antiporter that extrudes sodium in exchange for external protons. This chain is Na(+)/H(+) antiporter NhaA, found in Photorhabdus laumondii subsp. laumondii (strain DSM 15139 / CIP 105565 / TT01) (Photorhabdus luminescens subsp. laumondii).